Here is a 360-residue protein sequence, read N- to C-terminus: uncharacterized protein (360 aa).

Positions 22–32 (EEDVEPNEEAE) are enriched in acidic residues. The segment at 22-55 (EEDVEPNEEAEGPGGVHKKRRGARKKNRRQRMEG) is disordered. The span at 37–50 (VHKKRRGARKKNRR) shows a compositional bias: basic residues.

This is an uncharacterized protein from Caenorhabditis elegans.